The chain runs to 466 residues: 3-isopropylmalate dehydratase large subunit (466 aa).

[4Fe-4S] cluster-binding residues include Cys347, Cys407, and Cys410.

It belongs to the aconitase/IPM isomerase family. LeuC type 1 subfamily. As to quaternary structure, heterodimer of LeuC and LeuD. It depends on [4Fe-4S] cluster as a cofactor.

It carries out the reaction (2R,3S)-3-isopropylmalate = (2S)-2-isopropylmalate. The protein operates within amino-acid biosynthesis; L-leucine biosynthesis; L-leucine from 3-methyl-2-oxobutanoate: step 2/4. Catalyzes the isomerization between 2-isopropylmalate and 3-isopropylmalate, via the formation of 2-isopropylmaleate. The polypeptide is 3-isopropylmalate dehydratase large subunit (Escherichia coli O45:K1 (strain S88 / ExPEC)).